Here is a 292-residue protein sequence, read N- to C-terminus: MKYYFSSIGIVGHPRYDSALNTHKLLHSWLVNKGYNVIIENKVAHKLRLKNINFDSLANIGKKCDLAIVVGGDGNMLCAARILSCYNIKIIGINRGNLGFLTDLNPDTAFQQLYNVLSGEYFIEKRFLLEVKIVKENGTALINTAINEVVLHAGHVAHMIDFEVYINNEFAFSQRSDGLIISTPTGSTGYSLSAGGPILVSSLEAMVLIPMFPHTLSSRPLVINSTSIVYLKFKKHIHSELKISCDSQVILPLNSKDNIFVKKSKKFLCLLHPKNYNYFNVLSSKLNWSKRF.

The active-site Proton acceptor is aspartate 73. Residues 73–74 (DG), 147–148 (NE), histidine 158, arginine 175, aspartate 177, 188–193 (TGYSLS), and glutamine 248 contribute to the NAD(+) site.

Belongs to the NAD kinase family. A divalent metal cation serves as cofactor.

It localises to the cytoplasm. It catalyses the reaction NAD(+) + ATP = ADP + NADP(+) + H(+). Involved in the regulation of the intracellular balance of NAD and NADP, and is a key enzyme in the biosynthesis of NADP. Catalyzes specifically the phosphorylation on 2'-hydroxyl of the adenosine moiety of NAD to yield NADP. In Buchnera aphidicola subsp. Baizongia pistaciae (strain Bp), this protein is NAD kinase.